A 53-amino-acid chain; its full sequence is UPF0391 membrane protein Bcep18194_C7021 (53 aa).

Transmembrane regions (helical) follow at residues 5–25 (AVIF…GIAA) and 30–50 (IAKI…LLGV).

This sequence belongs to the UPF0391 family.

It localises to the cell membrane. The sequence is that of UPF0391 membrane protein Bcep18194_C7021 from Burkholderia lata (strain ATCC 17760 / DSM 23089 / LMG 22485 / NCIMB 9086 / R18194 / 383).